We begin with the raw amino-acid sequence, 318 residues long: tRNA-dihydrouridine(16) synthase (318 aa).

Residues 7 to 9 (PME) and Gln68 each bind FMN. The active-site Proton donor is the Cys98. FMN is bound by residues Lys139, 200–202 (NGE), and 224–225 (CR).

It belongs to the Dus family. DusC subfamily. The cofactor is FMN.

It catalyses the reaction 5,6-dihydrouridine(16) in tRNA + NADP(+) = uridine(16) in tRNA + NADPH + H(+). It carries out the reaction 5,6-dihydrouridine(16) in tRNA + NAD(+) = uridine(16) in tRNA + NADH + H(+). Its function is as follows. Catalyzes the synthesis of 5,6-dihydrouridine (D), a modified base found in the D-loop of most tRNAs, via the reduction of the C5-C6 double bond in target uridines. Specifically modifies U16 in tRNAs. This chain is tRNA-dihydrouridine(16) synthase, found in Vibrio vulnificus (strain CMCP6).